A 137-amino-acid polypeptide reads, in one-letter code: Nucleoside diphosphate kinase (137 aa).

ATP-binding residues include lysine 9, phenylalanine 57, arginine 85, threonine 91, arginine 102, and asparagine 112. Histidine 115 acts as the Pros-phosphohistidine intermediate in catalysis.

The protein belongs to the NDK family. As to quaternary structure, homotetramer. Mg(2+) is required as a cofactor.

The protein resides in the cytoplasm. The catalysed reaction is a 2'-deoxyribonucleoside 5'-diphosphate + ATP = a 2'-deoxyribonucleoside 5'-triphosphate + ADP. It carries out the reaction a ribonucleoside 5'-diphosphate + ATP = a ribonucleoside 5'-triphosphate + ADP. In terms of biological role, major role in the synthesis of nucleoside triphosphates other than ATP. The ATP gamma phosphate is transferred to the NDP beta phosphate via a ping-pong mechanism, using a phosphorylated active-site intermediate. The polypeptide is Nucleoside diphosphate kinase (Campylobacter jejuni subsp. doylei (strain ATCC BAA-1458 / RM4099 / 269.97)).